The chain runs to 91 residues: Cell division protein ZapA (91 aa).

Residues threonine 59–glycine 86 adopt a coiled-coil conformation.

Belongs to the ZapA family. Type 2 subfamily. As to quaternary structure, homodimer. Interacts with FtsZ.

Its subcellular location is the cytoplasm. Functionally, activator of cell division through the inhibition of FtsZ GTPase activity, therefore promoting FtsZ assembly into bundles of protofilaments necessary for the formation of the division Z ring. It is recruited early at mid-cell but it is not essential for cell division. In Geobacillus thermodenitrificans (strain NG80-2), this protein is Cell division protein ZapA.